Consider the following 96-residue polypeptide: Glutamyl-tRNA(Gln) amidotransferase subunit C (96 aa).

It belongs to the GatC family. In terms of assembly, heterotrimer of A, B and C subunits.

It carries out the reaction L-glutamyl-tRNA(Gln) + L-glutamine + ATP + H2O = L-glutaminyl-tRNA(Gln) + L-glutamate + ADP + phosphate + H(+). The enzyme catalyses L-aspartyl-tRNA(Asn) + L-glutamine + ATP + H2O = L-asparaginyl-tRNA(Asn) + L-glutamate + ADP + phosphate + 2 H(+). Functionally, allows the formation of correctly charged Asn-tRNA(Asn) or Gln-tRNA(Gln) through the transamidation of misacylated Asp-tRNA(Asn) or Glu-tRNA(Gln) in organisms which lack either or both of asparaginyl-tRNA or glutaminyl-tRNA synthetases. The reaction takes place in the presence of glutamine and ATP through an activated phospho-Asp-tRNA(Asn) or phospho-Glu-tRNA(Gln). This is Glutamyl-tRNA(Gln) amidotransferase subunit C from Pseudomonas aeruginosa (strain ATCC 15692 / DSM 22644 / CIP 104116 / JCM 14847 / LMG 12228 / 1C / PRS 101 / PAO1).